A 310-amino-acid polypeptide reads, in one-letter code: MAGAAPTTAFGQAVIGPPGSGKTTYCLGMSEFLRALGRRVAVVNLDPANEGLPYECAVDVGELVGLGDVMDALQLGPNGGLLYCMEYLEANLDWLRAKLDPLRGHYFLFDCPGQVELCTHHGALRSIFSQMTQWDLRLTAVHLVDSHYCTDPAKFISVLCTSLATMLHVELPHVNLLSKMDLIEHYGKLAFNLDYYTEVLDLSYLLDHLASDPFFRHYRQLNEKLVQLIEDYSLVSFIPLNIQDKESIQQVLQAVDKANGYCFGVQEQRSLEAMMSAAMGADFHFSSTLGLQEKYLAPSEQSVEQEAMQL.

Residue alanine 2 is modified to N-acetylalanine. Position 19–24 (19–24 (GSGKTT)) interacts with GTP. Positions 76-78 (GPN) match the Gly-Pro-Asn (GPN)-loop; involved in dimer interface motif. Position 178–181 (178–181 (SKMD)) interacts with GTP.

Belongs to the GPN-loop GTPase family. Heterodimers with GPN1 or GPN3. Binds to RNA polymerase II (RNAPII).

In terms of biological role, small GTPase required for proper localization of RNA polymerase II and III (RNAPII and RNAPIII). May act at an RNAP assembly step prior to nuclear import. This chain is GPN-loop GTPase 2 (GPN2), found in Bos taurus (Bovine).